A 368-amino-acid polypeptide reads, in one-letter code: Caffeine synthase 3 (368 aa).

Tyr23 lines the S-adenosyl-L-homocysteine pocket. Thr30 lines the caffeine pocket. Residues Cys65, Asn70, Asp102, Leu103, Ser137, and Phe138 each contribute to the S-adenosyl-L-homocysteine site. 3 residues coordinate caffeine: Tyr155, His158, and Trp159. Asn176 lines the Mg(2+) pocket. Caffeine is bound at residue Arg224. Mg(2+) contacts are provided by Asp262, Phe264, and Asn265. Residue Phe320 coordinates caffeine.

The protein belongs to the methyltransferase superfamily. Type-7 methyltransferase family. Requires Mg(2+) as cofactor.

The catalysed reaction is theobromine + S-adenosyl-L-methionine = caffeine + S-adenosyl-L-homocysteine + H(+). It catalyses the reaction 7-methylxanthine + S-adenosyl-L-methionine = theobromine + S-adenosyl-L-homocysteine + H(+). Its pathway is alkaloid biosynthesis. In terms of biological role, involved in the biosynthesis of caffeine. Catalyzes the conversion of 7-methylxanthine (7mX) to theobromine and of theobromine to caffeine. The chain is Caffeine synthase 3 from Camellia sinensis (Tea plant).